Consider the following 424-residue polypeptide: Calreticulin-3 (424 aa).

A signal peptide spans 1 to 28 (MGLPQNKLSFFCFFFLVSVLTLAPLAFS). N97 carries an N-linked (GlcNAc...) asparagine glycan. A disulfide bond links C114 and C146. The an alpha-D-glucoside site is built by Y118, K120, Y137, and D144. A run of 7 repeats spans residues 200-211 (REFGSMYTDWDI), 219-230 (VKNAKKPEDWDD), 236-247 (DPNDVKPEGFDS), 254-265 (DRKAKEPEDWDE), 269-279 (GLWEPPKIPNS), 283-293 (GPWKAKRIKNP), and 297-307 (GKWKNPWIDNP). The 4 X approximate repeats stretch occupies residues 200 to 265 (REFGSMYTDW…KAKEPEDWDE (66 aa)). Positions 228 to 237 (WDDREYIDDP) are enriched in acidic residues. The interval 228–275 (WDDREYIDDPNDVKPEGFDSIPREIPDRKAKEPEDWDEEENGLWEPPK) is disordered. Basic and acidic residues predominate over residues 238–260 (NDVKPEGFDSIPREIPDRKAKEP). The tract at residues 269–307 (GLWEPPKIPNSAYKGPWKAKRIKNPNYKGKWKNPWIDNP) is 3 X approximate repeats. Position 327 (E327) interacts with an alpha-D-glucoside. Basic and acidic residues predominate over residues 368–401 (FAEAEKERKAREDEEARIAREEGERRRKERDHRY). Positions 368–424 (FAEAEKERKAREDEEARIAREEGERRRKERDHRYGDRRRRYKRPNPRDYMDDYHDEL) are disordered. Residues 402 to 411 (GDRRRRYKRP) show a composition bias toward basic residues. The span at 412-424 (NPRDYMDDYHDEL) shows a compositional bias: basic and acidic residues. Residues 421-424 (HDEL) carry the Prevents secretion from ER motif.

This sequence belongs to the calreticulin family.

The protein localises to the endoplasmic reticulum lumen. Molecular calcium-binding chaperone promoting folding, oligomeric assembly and quality control in the ER via the calreticulin/calnexin cycle. This lectin may interact transiently with almost all of the monoglucosylated glycoproteins that are synthesized in the ER. Required for elongation factor Tu receptor (EFR) accumulation and for EFR, but not flagellin-sensing 2 (FLS2) signaling. The sequence is that of Calreticulin-3 (CRT3) from Arabidopsis thaliana (Mouse-ear cress).